A 371-amino-acid polypeptide reads, in one-letter code: Cytochrome b (371 aa).

4 helical membrane-spanning segments follow: residues 25–45, 69–90, 105–125, and 170–190; these read FGSM…FLAV, WLMQ…YIHI, WMSG…GYVL, and FFAL…LHII. Positions 75 and 89 each coordinate heme b. Residues histidine 174 and histidine 188 each contribute to the heme b site. Histidine 193 contacts a ubiquinone. 4 helical membrane passes run 218–238, 280–300, 312–332, and 339–358; these read YKDL…VSFF, LGGA…PLTH, LSQL…WAAT, and YIII…ISTP.

Belongs to the cytochrome b family. As to quaternary structure, the cytochrome bc1 complex contains 3 respiratory subunits (MT-CYB, CYC1 and UQCRFS1), 2 core proteins (UQCRC1 and UQCRC2) and probably 6 low-molecular weight proteins. Heme b serves as cofactor.

Its subcellular location is the mitochondrion inner membrane. Functionally, component of the ubiquinol-cytochrome c reductase complex (complex III or cytochrome b-c1 complex) that is part of the mitochondrial respiratory chain. The b-c1 complex mediates electron transfer from ubiquinol to cytochrome c. Contributes to the generation of a proton gradient across the mitochondrial membrane that is then used for ATP synthesis. The chain is Cytochrome b (MT-CYB) from Python regius (Ball python).